The primary structure comprises 76 residues: UPF0291 protein BA_1897/GBAA_1897/BAS1759 (76 aa).

Belongs to the UPF0291 family.

Its subcellular location is the cytoplasm. This is UPF0291 protein BA_1897/GBAA_1897/BAS1759 from Bacillus anthracis.